The sequence spans 590 residues: Acetolactate synthase large subunit (590 aa).

Residue E61 participates in thiamine diphosphate binding. Residues R163, H271–R292, and D314–D333 each bind FAD. The segment at Q405 to W484 is thiamine pyrophosphate binding. Mg(2+) contacts are provided by D455 and N482.

It belongs to the TPP enzyme family. Dimer of large and small chains. The cofactor is Mg(2+). Thiamine diphosphate is required as a cofactor.

It localises to the plastid. Its subcellular location is the chloroplast. It carries out the reaction 2 pyruvate + H(+) = (2S)-2-acetolactate + CO2. Its pathway is amino-acid biosynthesis; L-isoleucine biosynthesis; L-isoleucine from 2-oxobutanoate: step 1/4. It functions in the pathway amino-acid biosynthesis; L-valine biosynthesis; L-valine from pyruvate: step 1/4. In Pyropia yezoensis (Susabi-nori), this protein is Acetolactate synthase large subunit (ilvB).